We begin with the raw amino-acid sequence, 193 residues long: Pyridoxal 5'-phosphate synthase subunit PdxT (193 aa).

Gly48–Ser50 contributes to the L-glutamine binding site. Residue Cys80 is the Nucleophile of the active site. L-glutamine is bound by residues Arg107 and Ile136–Arg137. Active-site charge relay system residues include His172 and Glu174.

This sequence belongs to the glutaminase PdxT/SNO family. As to quaternary structure, in the presence of PdxS, forms a dodecamer of heterodimers. Only shows activity in the heterodimer.

The enzyme catalyses aldehydo-D-ribose 5-phosphate + D-glyceraldehyde 3-phosphate + L-glutamine = pyridoxal 5'-phosphate + L-glutamate + phosphate + 3 H2O + H(+). The catalysed reaction is L-glutamine + H2O = L-glutamate + NH4(+). Its pathway is cofactor biosynthesis; pyridoxal 5'-phosphate biosynthesis. Functionally, catalyzes the hydrolysis of glutamine to glutamate and ammonia as part of the biosynthesis of pyridoxal 5'-phosphate. The resulting ammonia molecule is channeled to the active site of PdxS. The chain is Pyridoxal 5'-phosphate synthase subunit PdxT from Clostridium botulinum (strain Loch Maree / Type A3).